Reading from the N-terminus, the 256-residue chain is MLKVIQLDKTYGSNKHSLKAVNFTAKPGEVTAIIGPSGAGKTTILRSINQLIRDDSGQILLDDTDIRQANKAELRKVRHHIGMIFQNYNLISPLTALENVLHGRLGAKSTVAGMLGLYSSAEKQEALQLLDEVGLKEYAYQRCDQLSGGQQQRVGIARALMQHPKMILCDEPIASLDPKSTTIVMDILRRLAKEKQLIILINLHQVDIAMAYTDHIVGINSGAIVFEGATNEVDDAVLQHIYRQPDQSTAVAANEN.

One can recognise an ABC transporter domain in the interval 2-246; the sequence is LKVIQLDKTY…VLQHIYRQPD (245 aa). ATP is bound at residue 35–42; the sequence is GPSGAGKT.

This sequence belongs to the ABC transporter superfamily. Phosphonates importer (TC 3.A.1.9.1) family. As to quaternary structure, the complex is composed of two ATP-binding proteins (PhnC), two transmembrane proteins (PhnE) and a solute-binding protein (PhnD).

The protein resides in the cell membrane. It carries out the reaction phosphonate(out) + ATP + H2O = phosphonate(in) + ADP + phosphate + H(+). Part of the ABC transporter complex PhnCDE involved in phosphonates import. Responsible for energy coupling to the transport system. The polypeptide is Phosphonates import ATP-binding protein PhnC (Lactiplantibacillus plantarum (strain ATCC BAA-793 / NCIMB 8826 / WCFS1) (Lactobacillus plantarum)).